The chain runs to 115 residues: Probable K(+)/H(+) antiporter subunit C (115 aa).

The next 3 helical transmembrane spans lie at 4-21, 28-47, and 75-97; these read ILSAGIGTLTASGVYLLL, VIIGLSLLSFAVNLFIFGMG, and ALVLTAIVIGFAMTALFLVVLLA.

This sequence belongs to the CPA3 antiporters (TC 2.A.63) subunit C family. May form a hetero-oligomeric complex that consists of six subunits: PhaAB, PhaC, PhaD, PhaE, PhaF and PhaG.

It localises to the cell membrane. In terms of biological role, part of a K(+) efflux system which is required for the adaptation of R.meliloti to alkaline pH as well as for the infection process during symbiotic nodule development. This is Probable K(+)/H(+) antiporter subunit C (phaC) from Rhizobium meliloti (strain 1021) (Ensifer meliloti).